The chain runs to 47 residues: PhoP/PhoQ regulator MgrB (47 aa).

The chain crosses the membrane as a helical span at residues 6-26 (WVALVVVVLACLLLWAQVFNM).

It belongs to the MgrB family. May form homooligomers. Probably interacts with the periplasmic domain of PhoQ.

The protein localises to the cell inner membrane. In terms of biological role, phoP-regulated transcription is redox-sensitive, being activated when the periplasm becomes more reducing. MgrB acts between DsbA/DsbB and PhoP/PhoQ in this pathway. Represses PhoP/PhoQ signaling, possibly by binding to the periplasmic domain of PhoQ, altering its activity and that of downstream effector PhoP. The polypeptide is PhoP/PhoQ regulator MgrB (Escherichia coli O127:H6 (strain E2348/69 / EPEC)).